We begin with the raw amino-acid sequence, 552 residues long: Urocanate hydratase (552 aa).

Residues 48-49, glutamine 126, 172-174, aspartate 192, 238-239, 259-263, 268-269, and tyrosine 317 contribute to the NAD(+) site; these read GG, GMG, NA, QTSAH, and YL. The active site involves cysteine 405. Glycine 487 provides a ligand contact to NAD(+).

The protein belongs to the urocanase family. NAD(+) serves as cofactor.

The protein localises to the cytoplasm. It carries out the reaction 4-imidazolone-5-propanoate = trans-urocanate + H2O. It participates in amino-acid degradation; L-histidine degradation into L-glutamate; N-formimidoyl-L-glutamate from L-histidine: step 2/3. Catalyzes the conversion of urocanate to 4-imidazolone-5-propionate. The protein is Urocanate hydratase of Streptomyces griseus subsp. griseus (strain JCM 4626 / CBS 651.72 / NBRC 13350 / KCC S-0626 / ISP 5235).